Reading from the N-terminus, the 284-residue chain is Tropomyosin (284 aa).

The stretch at 1-284 (MDGIKKKMIA…DQTFAELTGY (284 aa)) forms a coiled coil. 2 stretches are compositionally biased toward basic and acidic residues: residues 29 to 42 (LKQK…KETE) and 111 to 136 (AKFD…RSIA). Disordered regions lie at residues 29–49 (LKQK…LNNR) and 111–149 (AKFD…DQQK).

This sequence belongs to the tropomyosin family.

Its function is as follows. Tropomyosin, in association with the troponin complex, plays a central role in the calcium dependent regulation of muscle contraction. The chain is Tropomyosin from Clonorchis sinensis (Chinese liver fluke).